The sequence spans 245 residues: 1-(5-phosphoribosyl)-5-[(5-phosphoribosylamino)methylideneamino] imidazole-4-carboxamide isomerase (245 aa).

Asp7 (proton acceptor) is an active-site residue. The Proton donor role is filled by Asp129.

Belongs to the HisA/HisF family.

It localises to the cytoplasm. The catalysed reaction is 1-(5-phospho-beta-D-ribosyl)-5-[(5-phospho-beta-D-ribosylamino)methylideneamino]imidazole-4-carboxamide = 5-[(5-phospho-1-deoxy-D-ribulos-1-ylimino)methylamino]-1-(5-phospho-beta-D-ribosyl)imidazole-4-carboxamide. The protein operates within amino-acid biosynthesis; L-histidine biosynthesis; L-histidine from 5-phospho-alpha-D-ribose 1-diphosphate: step 4/9. The protein is 1-(5-phosphoribosyl)-5-[(5-phosphoribosylamino)methylideneamino] imidazole-4-carboxamide isomerase of Alteromonas mediterranea (strain DSM 17117 / CIP 110805 / LMG 28347 / Deep ecotype).